A 188-amino-acid chain; its full sequence is Peptide deformylase (188 aa).

Fe cation is bound by residues cysteine 94 and histidine 136. Glutamate 137 is an active-site residue. Histidine 140 contributes to the Fe cation binding site.

Belongs to the polypeptide deformylase family. Fe(2+) serves as cofactor.

It catalyses the reaction N-terminal N-formyl-L-methionyl-[peptide] + H2O = N-terminal L-methionyl-[peptide] + formate. Its function is as follows. Removes the formyl group from the N-terminal Met of newly synthesized proteins. Requires at least a dipeptide for an efficient rate of reaction. N-terminal L-methionine is a prerequisite for activity but the enzyme has broad specificity at other positions. The protein is Peptide deformylase of Pelodictyon phaeoclathratiforme (strain DSM 5477 / BU-1).